Reading from the N-terminus, the 90-residue chain is MPKRKAKGDAKGDKGKVKDEPQRRSARLSAKPALPKPEPRPKKAPAKKGEKLAKGRKGKAEVSKDGNNPAKNRDASTVQSQKAEGTGDAK.

Residues 1–90 (MPKRKAKGDA…QKAEGTGDAK (90 aa)) form a disordered region. Basic and acidic residues predominate over residues 7 to 23 (KGDAKGDKGKVKDEPQR). At Ser29 the chain carries ADP-ribosylserine. The span at 37–64 (PEPRPKKAPAKKGEKLAKGRKGKAEVSK) shows a compositional bias: basic and acidic residues. Residues 65 to 83 (DGNNPAKNRDASTVQSQKA) are compositionally biased toward polar residues. The residue at position 80 (Ser80) is a Phosphoserine. At Lys82 the chain carries N6-acetyllysine.

It belongs to the HMGN family.

It is found in the nucleus. The chain is High mobility group nucleosome-binding domain-containing protein 4 (HMGN4) from Bos taurus (Bovine).